The chain runs to 89 residues: Small ribosomal subunit protein uS15 (89 aa).

It belongs to the universal ribosomal protein uS15 family. Part of the 30S ribosomal subunit. Forms a bridge to the 50S subunit in the 70S ribosome, contacting the 23S rRNA.

Functionally, one of the primary rRNA binding proteins, it binds directly to 16S rRNA where it helps nucleate assembly of the platform of the 30S subunit by binding and bridging several RNA helices of the 16S rRNA. Its function is as follows. Forms an intersubunit bridge (bridge B4) with the 23S rRNA of the 50S subunit in the ribosome. In Sodalis glossinidius (strain morsitans), this protein is Small ribosomal subunit protein uS15.